The chain runs to 427 residues: Glutamate-1-semialdehyde 2,1-aminomutase 2 (427 aa).

An N6-(pyridoxal phosphate)lysine modification is found at Lys-267.

This sequence belongs to the class-III pyridoxal-phosphate-dependent aminotransferase family. HemL subfamily. As to quaternary structure, homodimer. The cofactor is pyridoxal 5'-phosphate.

It localises to the cytoplasm. It catalyses the reaction (S)-4-amino-5-oxopentanoate = 5-aminolevulinate. It functions in the pathway porphyrin-containing compound metabolism; protoporphyrin-IX biosynthesis; 5-aminolevulinate from L-glutamyl-tRNA(Glu): step 2/2. This chain is Glutamate-1-semialdehyde 2,1-aminomutase 2, found in Staphylococcus haemolyticus (strain JCSC1435).